We begin with the raw amino-acid sequence, 243 residues long: Linker for activation of T-cells family member 2 (243 aa).

Residues 1–5 (MSSGT) lie on the Extracellular side of the membrane. The chain crosses the membrane as a helical; Signal-anchor for type III membrane protein span at residues 6 to 26 (ELLWPGAALLVLLGVAASLCV). 2 S-palmitoyl cysteine lipidation sites follow: cysteine 25 and cysteine 28. At 27–243 (RCSRPGAKRS…VNGEVAATEA (217 aa)) the chain is on the cytoplasmic side. Serine 44 carries the post-translational modification Phosphoserine. At tyrosine 58 the chain carries Phosphotyrosine. 2 positions are modified to phosphoserine: serine 59 and serine 92. Tyrosine 136, tyrosine 193, and tyrosine 233 each carry phosphotyrosine. Residues 174-243 (PTSGLCPSAS…VNGEVAATEA (70 aa)) are disordered.

When phosphorylated, interacts with GRB2. May also interact with SOS1, GAB1 and CBL. In terms of processing, phosphorylated on tyrosines following cross-linking of BCR in B-cells, FCGR1 in myeloid cells, or FCER1 in mast cells; which induces the recruitment of GRB2. Post-translationally, may be polyubiquitinated. As to expression, highly expressed in spleen, peripheral blood lymphocytes, and germinal centers of lymph nodes. Also expressed in placenta, lung, pancreas and small intestine. Present in B-cells, NK cells and monocytes. Absent from T-cells (at protein level).

Its subcellular location is the cell membrane. Its function is as follows. Involved in FCER1 (high affinity immunoglobulin epsilon receptor)-mediated signaling in mast cells. May also be involved in BCR (B-cell antigen receptor)-mediated signaling in B-cells and FCGR1 (high affinity immunoglobulin gamma Fc receptor I)-mediated signaling in myeloid cells. Couples activation of these receptors and their associated kinases with distal intracellular events through the recruitment of GRB2. The chain is Linker for activation of T-cells family member 2 (LAT2) from Homo sapiens (Human).